Here is a 284-residue protein sequence, read N- to C-terminus: MNHDSILLGLIGEDISLSRTPAMHEAEGLAQGAATVYRRIDTLTDRARGRSLQELLDAARSTGFNGLNITHPYKQAVLPLLDEVSEQAAQLGAVNTVVIGEDGRTSGHNTDVTGFARGLEEGLPDATMTTVVQVGAGGVGNAVAYSLVTHGVEQLQVADLDPARAQALADAINSAIGREAVHGIDARGVEEAIAAADGVVNATPMGMLAHPGTAFDTSCLTPHHWVGDVVYMPIETQLLKDARALGCRTLDGTRMAIHQAVDAFRLFTGLEPDVERMRATFLSL.

Shikimate contacts are provided by serine 18 and threonine 70. L-quinate is bound by residues 18–20 and threonine 70; that span reads SRT. The active-site Proton acceptor is the tyrosine 73. 3 residues coordinate shikimate: lysine 74, asparagine 95, and aspartate 111. Positions 74, 95, and 111 each coordinate L-quinate. NAD(+) contacts are provided by residues 137–138, aspartate 159, arginine 164, 203–206, alanine 214, valine 229, and glycine 252; these read GG and TPMG. Glutamine 259 serves as a coordination point for shikimate. Glutamine 259 is an L-quinate binding site.

This sequence belongs to the shikimate dehydrogenase family. Homodimer.

The enzyme catalyses L-quinate + NAD(+) = 3-dehydroquinate + NADH + H(+). It catalyses the reaction shikimate + NAD(+) = 3-dehydroshikimate + NADH + H(+). Its pathway is metabolic intermediate biosynthesis; chorismate biosynthesis; chorismate from D-erythrose 4-phosphate and phosphoenolpyruvate: step 4/7. It participates in aromatic compound metabolism; 3,4-dihydroxybenzoate biosynthesis; 3-dehydroquinate from D-quinate (NAD(+) route). In terms of biological role, involved in the biosynthesis of the chorismate, which leads to the biosynthesis of aromatic amino acids, and plays a key role in the quinate degradation pathway. Catalyzes the NAD(+)-dependent oxidation of both quinate and shikimate to 3-dehydroquinate and 3-dehydroshikimate, respectively. It can only use NAD. This chain is Quinate/shikimate dehydrogenase (NAD(+)), found in Corynebacterium efficiens (strain DSM 44549 / YS-314 / AJ 12310 / JCM 11189 / NBRC 100395).